The sequence spans 293 residues: 4-hydroxy-tetrahydrodipicolinate synthase (293 aa).

Pyruvate is bound at residue threonine 47. Tyrosine 136 functions as the Proton donor/acceptor in the catalytic mechanism. Lysine 164 functions as the Schiff-base intermediate with substrate in the catalytic mechanism. Isoleucine 206 is a binding site for pyruvate.

Belongs to the DapA family. As to quaternary structure, homotetramer; dimer of dimers.

It is found in the cytoplasm. The enzyme catalyses L-aspartate 4-semialdehyde + pyruvate = (2S,4S)-4-hydroxy-2,3,4,5-tetrahydrodipicolinate + H2O + H(+). It functions in the pathway amino-acid biosynthesis; L-lysine biosynthesis via DAP pathway; (S)-tetrahydrodipicolinate from L-aspartate: step 3/4. Functionally, catalyzes the condensation of (S)-aspartate-beta-semialdehyde [(S)-ASA] and pyruvate to 4-hydroxy-tetrahydrodipicolinate (HTPA). The chain is 4-hydroxy-tetrahydrodipicolinate synthase from Listeria monocytogenes serotype 4a (strain HCC23).